Consider the following 408-residue polypeptide: Multidrug resistance protein MdtG (408 aa).

11 helical membrane-spanning segments follow: residues 16–36 (LIVA…VMPF), 58–78 (IVFS…GGLA), 92–112 (LGMG…QFLI), 115–135 (ALLG…ATQV), 146–166 (TLST…GLLA), 173–193 (PVFF…LLCI), 224–244 (LFVT…ILTL), 253–273 (VGNI…AALL), 290–310 (ILIA…FVQT), 319–339 (FLLG…LVYN), and 378–398 (AVFL…WNSL).

This sequence belongs to the major facilitator superfamily. DHA1 family. MdtG (TC 2.A.1.2.20) subfamily.

The protein localises to the cell inner membrane. Its function is as follows. Confers resistance to fosfomycin and deoxycholate. The sequence is that of Multidrug resistance protein MdtG from Escherichia fergusonii (strain ATCC 35469 / DSM 13698 / CCUG 18766 / IAM 14443 / JCM 21226 / LMG 7866 / NBRC 102419 / NCTC 12128 / CDC 0568-73).